A 305-amino-acid polypeptide reads, in one-letter code: Tetraacyldisaccharide 4'-kinase (305 aa).

S39 to T46 is an ATP binding site.

This sequence belongs to the LpxK family.

It catalyses the reaction a lipid A disaccharide + ATP = a lipid IVA + ADP + H(+). It participates in glycolipid biosynthesis; lipid IV(A) biosynthesis; lipid IV(A) from (3R)-3-hydroxytetradecanoyl-[acyl-carrier-protein] and UDP-N-acetyl-alpha-D-glucosamine: step 6/6. Functionally, transfers the gamma-phosphate of ATP to the 4'-position of a tetraacyldisaccharide 1-phosphate intermediate (termed DS-1-P) to form tetraacyldisaccharide 1,4'-bis-phosphate (lipid IVA). This chain is Tetraacyldisaccharide 4'-kinase, found in Pseudoalteromonas atlantica (strain T6c / ATCC BAA-1087).